A 61-amino-acid polypeptide reads, in one-letter code: MELKTLREKSADELKAHLIDLRKEQFSVRMQQVTGQLPKTHDIRRVRREIARVKTLLGSTK.

The protein belongs to the universal ribosomal protein uL29 family.

In Stenotrophomonas maltophilia (strain R551-3), this protein is Large ribosomal subunit protein uL29.